Consider the following 609-residue polypeptide: 2',5'-phosphodiesterase 12 (609 aa).

The transit peptide at 1–16 directs the protein to the mitochondrion; sequence MWRLPGVRAALRGVRT. A disordered region spans residues 203 to 231; the sequence is PRAAEPEGGGPSSSSPSSPSPGWTETGVD. A compositionally biased stretch (low complexity) spans 214–224; that stretch reads SSSSPSSPSPG. At serine 217 the chain carries Phosphoserine. Mg(2+)-binding residues include glutamate 351, aspartate 496, and asparagine 498. Residue aspartate 496 is the Proton donor/acceptor of the active site.

It belongs to the CCR4/nocturin family. Mg(2+) is required as a cofactor. Liver.

It is found in the mitochondrion matrix. It carries out the reaction Exonucleolytic cleavage of poly(A) to 5'-AMP.. Enzyme that cleaves 2',5'-phosphodiester bond linking adenosines of the 5'-triphosphorylated oligoadenylates, triphosphorylated oligoadenylates referred as 2-5A modulates the 2-5A system. Degrades triphosphorylated 2-5A to produce AMP and ATP. Also cleaves 3',5'-phosphodiester bond of oligoadenylates. Plays a role as a negative regulator of the 2-5A system that is one of the major pathways for antiviral and antitumor functions induced by interferons (IFNs). Suppression of this enzyme increases cellular 2-5A levels and decreases viral replication in cultured small-airway epithelial cells. This is 2',5'-phosphodiesterase 12 (PDE12) from Bos taurus (Bovine).